A 313-amino-acid chain; its full sequence is tRNA dimethylallyltransferase (313 aa).

9-16 is an ATP binding site; that stretch reads GPTATGKS. 11 to 16 is a binding site for substrate; sequence TATGKS.

This sequence belongs to the IPP transferase family. Monomer. Mg(2+) is required as a cofactor.

It catalyses the reaction adenosine(37) in tRNA + dimethylallyl diphosphate = N(6)-dimethylallyladenosine(37) in tRNA + diphosphate. Its function is as follows. Catalyzes the transfer of a dimethylallyl group onto the adenine at position 37 in tRNAs that read codons beginning with uridine, leading to the formation of N6-(dimethylallyl)adenosine (i(6)A). This is tRNA dimethylallyltransferase from Mycobacteroides abscessus (strain ATCC 19977 / DSM 44196 / CCUG 20993 / CIP 104536 / JCM 13569 / NCTC 13031 / TMC 1543 / L948) (Mycobacterium abscessus).